The following is a 282-amino-acid chain: ATP synthase gamma chain (282 aa).

This sequence belongs to the ATPase gamma chain family. In terms of assembly, F-type ATPases have 2 components, CF(1) - the catalytic core - and CF(0) - the membrane proton channel. CF(1) has five subunits: alpha(3), beta(3), gamma(1), delta(1), epsilon(1). CF(0) has three main subunits: a, b and c.

It localises to the cell membrane. Produces ATP from ADP in the presence of a proton gradient across the membrane. The gamma chain is believed to be important in regulating ATPase activity and the flow of protons through the CF(0) complex. The polypeptide is ATP synthase gamma chain (Clostridium botulinum (strain Loch Maree / Type A3)).